The following is a 218-amino-acid chain: C-type lectin domain family 2 member H (218 aa).

Residues 1-52 lie on the Cytoplasmic side of the membrane; the sequence is MNAAKVETSSMGMLQRADLTAADCLQEGEMGKKIQGKCFRIISTVSPVKLYC. The chain crosses the membrane as a helical; Signal-anchor for type II membrane protein span at residues 53–73; the sequence is CYGVIMVLTVAVIALSVALSV. The Extracellular segment spans residues 74 to 218; it reads RNKIPAMEDR…SRVGSVPRHV (145 aa). An intrachain disulfide couples Cys90 to Cys101. The region spanning 97-201 is the C-type lectin domain; the sequence is FGSKCFYFSE…SYTHRKWICS (105 aa). The N-linked (GlcNAc...) asparagine glycan is linked to Asn110. Cys118 and Cys200 are joined by a disulfide.

In terms of tissue distribution, detected in ileum, liver, kidney and in IL2-activated natural killer cells.

It is found in the cell membrane. Lectin-type cell surface receptor. The chain is C-type lectin domain family 2 member H (Clec2h) from Mus musculus (Mouse).